A 148-amino-acid polypeptide reads, in one-letter code: MKLHELKNVKGAVHRKKRVGCGEGGGHGKTSGRGGKGQTARSGSSIRPGFEGGQMPLYRKLPHRGFNQYNFRTELPVVNVGDLASLDASITEVTAEVLAAQGLIRAGETSVKILGDGELSRALKVTAVKFSESAKAKIEKAGGQAITA.

Residues 14–54 (HRKKRVGCGEGGGHGKTSGRGGKGQTARSGSSIRPGFEGGQ) form a disordered region. Residues 21-37 (CGEGGGHGKTSGRGGKG) are compositionally biased toward gly residues.

This sequence belongs to the universal ribosomal protein uL15 family. In terms of assembly, part of the 50S ribosomal subunit.

Functionally, binds to the 23S rRNA. The polypeptide is Large ribosomal subunit protein uL15 (Opitutus terrae (strain DSM 11246 / JCM 15787 / PB90-1)).